Here is a 129-residue protein sequence, read N- to C-terminus: Small ribosomal subunit protein uS13 (129 aa).

Residues 95 to 114 (NLPVRGQRTKTNARTRRGPR) show a composition bias toward basic residues. The interval 95 to 129 (NLPVRGQRTKTNARTRRGPRKTVAGRGQKRGATKK) is disordered.

This sequence belongs to the universal ribosomal protein uS13 family. In terms of assembly, part of the 30S ribosomal subunit. Forms a loose heterodimer with protein S19. Forms two bridges to the 50S subunit in the 70S ribosome.

In terms of biological role, located at the top of the head of the 30S subunit, it contacts several helices of the 16S rRNA. In the 70S ribosome it contacts the 23S rRNA (bridge B1a) and protein L5 of the 50S subunit (bridge B1b), connecting the 2 subunits; these bridges are implicated in subunit movement. Contacts the tRNAs in the A and P-sites. The sequence is that of Small ribosomal subunit protein uS13 from Dehalococcoides mccartyi (strain ATCC BAA-2100 / JCM 16839 / KCTC 5957 / BAV1).